The primary structure comprises 276 residues: Putative ABC transporter ATP-binding protein MA_4021 (276 aa).

Positions 5-247 (FDLKNISYSY…DLNLLLSTNL (243 aa)) constitute an ABC transporter domain. Residue 38-45 (GSNGSGKS) coordinates ATP.

This sequence belongs to the ABC transporter superfamily.

Its subcellular location is the cell membrane. Probably part of an ABC transporter complex. Responsible for energy coupling to the transport system. This Methanosarcina acetivorans (strain ATCC 35395 / DSM 2834 / JCM 12185 / C2A) protein is Putative ABC transporter ATP-binding protein MA_4021.